We begin with the raw amino-acid sequence, 91 residues long: MANTPSAKKRAKQAEKRRSHNASLRSMVRTYIKNVVKAIDAKDLAKAQAAFTAAVPVIDRMADKGIIHKNKAARHKSRLSGHIKALSTAAA.

The segment at 1-23 (MANTPSAKKRAKQAEKRRSHNAS) is disordered. Positions 7 to 20 (AKKRAKQAEKRRSH) are enriched in basic residues.

This sequence belongs to the bacterial ribosomal protein bS20 family.

Binds directly to 16S ribosomal RNA. In Pseudomonas paraeruginosa (strain DSM 24068 / PA7) (Pseudomonas aeruginosa (strain PA7)), this protein is Small ribosomal subunit protein bS20.